Consider the following 158-residue polypeptide: EOLA-like protein (158 aa).

The ASCH domain maps to 6–92 (LSFRQPYAGF…IAGLVDIGET (87 aa)).

It belongs to the EOLA family.

This is EOLA-like protein from Pongo abelii (Sumatran orangutan).